Reading from the N-terminus, the 349-residue chain is Terpene synthase 2 (349 aa).

The short motif at 84–89 (DDLFDG) is the DDxx(x)D/E motif element. The NDxxSxxxD/E motif motif lies at 229-237 (NDCVSYEKE).

The protein belongs to the terpene synthase family.

It carries out the reaction (2E,6E)-farnesyl diphosphate = (3S)-(+)-asterisca-2(9),6-diene + diphosphate. The enzyme catalyses (2E)-geranyl diphosphate = (Z)-beta-ocimene + diphosphate. The catalysed reaction is (2E)-geranyl diphosphate + H2O = linalool + diphosphate. Terpene synthase that converts its substrate farnesyl diphosphate (FPP) into the sesquiterpene (3S)-(+)-asterisca-2(9),6-diene. Is also able to convert geranyl diphosphate (GPP) into a mixture of monoterpenes including (Z)-beta-ocimene, allo-ocimene and linalool. This is Terpene synthase 2 from Dictyostelium discoideum (Social amoeba).